The primary structure comprises 968 residues: Isoleucine--tRNA ligase (968 aa).

The short motif at 68 to 78 (PYANGALHMGH) is the 'HIGH' region element. Glutamate 582 serves as a coordination point for L-isoleucyl-5'-AMP. A 'KMSKS' region motif is present at residues 623–627 (KMSKS). Lysine 626 lines the ATP pocket. Zn(2+)-binding residues include cysteine 936, cysteine 939, cysteine 956, and cysteine 959.

The protein belongs to the class-I aminoacyl-tRNA synthetase family. IleS type 1 subfamily. In terms of assembly, monomer. Requires Zn(2+) as cofactor.

The protein resides in the cytoplasm. It catalyses the reaction tRNA(Ile) + L-isoleucine + ATP = L-isoleucyl-tRNA(Ile) + AMP + diphosphate. Catalyzes the attachment of isoleucine to tRNA(Ile). As IleRS can inadvertently accommodate and process structurally similar amino acids such as valine, to avoid such errors it has two additional distinct tRNA(Ile)-dependent editing activities. One activity is designated as 'pretransfer' editing and involves the hydrolysis of activated Val-AMP. The other activity is designated 'posttransfer' editing and involves deacylation of mischarged Val-tRNA(Ile). In Prochlorococcus marinus (strain MIT 9312), this protein is Isoleucine--tRNA ligase.